The chain runs to 420 residues: 3-isopropylmalate dehydratase large subunit (420 aa).

Residues C301, C361, and C364 each coordinate [4Fe-4S] cluster.

It belongs to the aconitase/IPM isomerase family. LeuC type 2 subfamily. Heterodimer of LeuC and LeuD. The cofactor is [4Fe-4S] cluster.

The catalysed reaction is (2R,3S)-3-isopropylmalate = (2S)-2-isopropylmalate. It participates in amino-acid biosynthesis; L-leucine biosynthesis; L-leucine from 3-methyl-2-oxobutanoate: step 2/4. Catalyzes the isomerization between 2-isopropylmalate and 3-isopropylmalate, via the formation of 2-isopropylmaleate. This is 3-isopropylmalate dehydratase large subunit from Desulfovibrio desulfuricans (strain ATCC 27774 / DSM 6949 / MB).